We begin with the raw amino-acid sequence, 492 residues long: Uridine-cytidine kinase D (492 aa).

Positions 36–56 (PLPKNKKDHDQSIESDSSFTR) are disordered. 117–124 (GPVGAGKT) contributes to the ATP binding site. Residues 290 to 460 (EPVYVCKAKY…PQTFLYLYFK (171 aa)) form the CYTH domain. A compositionally biased stretch (low complexity) spans 468–483 (PNYSKLKPNNTNSKIL). The disordered stretch occupies residues 468–492 (PNYSKLKPNNTNSKILKNNKDKKNL).

This sequence belongs to the uridine kinase family.

It carries out the reaction uridine + ATP = UMP + ADP + H(+). It catalyses the reaction cytidine + ATP = CMP + ADP + H(+). The protein operates within pyrimidine metabolism; CTP biosynthesis via salvage pathway; CTP from cytidine: step 1/3. Its pathway is pyrimidine metabolism; UMP biosynthesis via salvage pathway; UMP from uridine: step 1/1. Functionally, catalyzes the conversion of uridine into uridine monophosphate and cytidine into cytidine monophosphate in the pyrimidine salvage pathway. In Dictyostelium discoideum (Social amoeba), this protein is Uridine-cytidine kinase D (udkD).